The following is a 610-amino-acid chain: MSDRFDAKAFLSTVTSQPGVYRMYDATGTVIYVGKAKDLKKRLASYFRQQVGSRKTETLVKNIAQIDVTVTHTETEALLLEHNYIKLYQPRYNVLLRDDKSYPLIFLSADSHPRLAVHRGAKHAKGEYFGPFPNSYAVRETLALLQKLFPIRQCENSVYRNRSRPCLQYQIGRCLGPCVAGLVSEDEYRQQVDYVRLFLSGKDQQVLHQLIERMENASKALNFEEAARIRDQIQAVRRVTERQFVSGNSDDLDVIGVAFEAGMACLHVLFIRQGKVLGSRSYFPKVPGGTEMSEVVQTFVGQFYLQGSQMRTLPAEILLDFTLPEKELLAESLSELAGRKIQIQSKPRGDRARYLKLARTNAATALTTKLSQQSTIHQRLAELTKVLNLSEINRMECFDISHTMGEQTVASCVVFDANGPLRSEYRRYNITGITPGDDYAAMAQVLKRRYGKALEEKKIPDVIFIDGGKGQLGMAIDVFNSLNVSWDKNKPLLIGIAKGADRKAGLETLFFVPEGEGIALPSDSPALHVIQHIRDDSHNHAITGHRQRRAKVRNTSALELIDGVGPKRRQVLLKYMGGLQPLLNASVEEIAKVPGISQALAEKIYNALKH.

Residues 16 to 94 enclose the GIY-YIG domain; the sequence is SQPGVYRMYD…IKLYQPRYNV (79 aa). In terms of domain architecture, UVR spans 204–239; it reads QQVLHQLIERMENASKALNFEEAARIRDQIQAVRRV.

This sequence belongs to the UvrC family. As to quaternary structure, interacts with UvrB in an incision complex.

Its subcellular location is the cytoplasm. Functionally, the UvrABC repair system catalyzes the recognition and processing of DNA lesions. UvrC both incises the 5' and 3' sides of the lesion. The N-terminal half is responsible for the 3' incision and the C-terminal half is responsible for the 5' incision. This is UvrABC system protein C from Serratia proteamaculans (strain 568).